The primary structure comprises 1093 residues: Carbamoyl phosphate synthase large chain (1093 aa).

A carboxyphosphate synthetic domain region spans residues 1–412 (MPRRNDIRKI…SLMKALRSLE (412 aa)). Arginine 139, arginine 179, glycine 185, glycine 186, glutamate 218, valine 220, glutamate 225, glycine 251, valine 252, histidine 253, glutamine 295, and glutamate 309 together coordinate ATP. One can recognise an ATP-grasp 1 domain in the interval 143–338 (KDAMTRIGLD…IAKIAAKLAV (196 aa)). The Mg(2+) site is built by glutamine 295, glutamate 309, and asparagine 311. Positions 295, 309, and 311 each coordinate Mn(2+). Positions 413–560 (TGKRVGAEVL…YSSYEEEDEA (148 aa)) are oligomerization domain. The carbamoyl phosphate synthetic domain stretch occupies residues 561–952 (PQTDKRKVII…AFAKAQLSAG (392 aa)). The 192-residue stretch at 689-880 (GKLLEQLQIP…LAKIASRLMT (192 aa)) folds into the ATP-grasp 2 domain. Residues arginine 725, histidine 764, leucine 766, glutamate 771, glycine 796, isoleucine 797, histidine 798, serine 799, glutamine 839, and glutamate 851 each contribute to the ATP site. Mg(2+) is bound by residues glutamine 839, glutamate 851, and asparagine 853. Glutamine 839, glutamate 851, and asparagine 853 together coordinate Mn(2+). An MGS-like domain is found at 953-1093 (LILPSSGTVF…QLLHAGHAVK (141 aa)). The segment at 953-1093 (LILPSSGTVF…QLLHAGHAVK (141 aa)) is allosteric domain.

Belongs to the CarB family. In terms of assembly, composed of two chains; the small (or glutamine) chain promotes the hydrolysis of glutamine to ammonia, which is used by the large (or ammonia) chain to synthesize carbamoyl phosphate. Tetramer of heterodimers (alpha,beta)4. Requires Mg(2+) as cofactor. The cofactor is Mn(2+).

It carries out the reaction hydrogencarbonate + L-glutamine + 2 ATP + H2O = carbamoyl phosphate + L-glutamate + 2 ADP + phosphate + 2 H(+). It catalyses the reaction hydrogencarbonate + NH4(+) + 2 ATP = carbamoyl phosphate + 2 ADP + phosphate + 2 H(+). It functions in the pathway amino-acid biosynthesis; L-arginine biosynthesis; carbamoyl phosphate from bicarbonate: step 1/1. The protein operates within pyrimidine metabolism; UMP biosynthesis via de novo pathway; (S)-dihydroorotate from bicarbonate: step 1/3. Functionally, large subunit of the glutamine-dependent carbamoyl phosphate synthetase (CPSase). CPSase catalyzes the formation of carbamoyl phosphate from the ammonia moiety of glutamine, carbonate, and phosphate donated by ATP, constituting the first step of 2 biosynthetic pathways, one leading to arginine and/or urea and the other to pyrimidine nucleotides. The large subunit (synthetase) binds the substrates ammonia (free or transferred from glutamine from the small subunit), hydrogencarbonate and ATP and carries out an ATP-coupled ligase reaction, activating hydrogencarbonate by forming carboxy phosphate which reacts with ammonia to form carbamoyl phosphate. This Acidobacterium capsulatum (strain ATCC 51196 / DSM 11244 / BCRC 80197 / JCM 7670 / NBRC 15755 / NCIMB 13165 / 161) protein is Carbamoyl phosphate synthase large chain.